The primary structure comprises 522 residues: Solute carrier family 2, facilitated glucose transporter member 2 (522 aa).

The Cytoplasmic segment spans residues 1 to 10; that stretch reads MSEDKITGTL. The helical transmembrane segment at 11-31 threads the bilayer; sequence AFTVFTAVLGSFQFGYDIGVI. Topologically, residues 32–96 are extracellular; that stretch reads NAPQEVIISH…SAHIVTMLWS (65 aa). N62 is a glycosylation site (N-linked (GlcNAc...) asparagine). The chain crosses the membrane as a helical span at residues 97–117; that stretch reads LSVSSFAVGGMVASFFGGWLG. Over 118 to 125 the chain is Cytoplasmic; the sequence is DKLGRIKA. Residues 126 to 146 form a helical membrane-spanning segment; it reads MLAANSLSLTGALLMGCSKFG. Residues 147–156 lie on the Extracellular side of the membrane; that stretch reads PAHALIIAGR. A helical membrane pass occupies residues 157 to 177; the sequence is SVSGLYCGLISGLVPMYIGEI. At 178 to 185 the chain is on the cytoplasmic side; the sequence is APTTLRGA. The helical transmembrane segment at 186–206 threads the bilayer; it reads LGTLHQLALVTGILISQIAGL. Q191 contributes to the D-glucose binding site. At 207–215 the chain is on the extracellular side; the sequence is SFILGNQDY. A helical transmembrane segment spans residues 216 to 236; it reads WHILLGLSAVPALLQCLLLLF. At 237–301 the chain is on the cytoplasmic side; the sequence is CPESPRYLYL…LFTDPNYRQP (65 aa). A helical transmembrane segment spans residues 302–322; the sequence is IVVALMLHLAQQFSGINGIFY. Residues 312–313 and N318 contribute to the D-glucose site; that span reads QQ. Residues 323 to 337 are Extracellular-facing; that stretch reads YSTSIFQTAGISQPV. The helical transmembrane segment at 338–358 threads the bilayer; it reads YATIGVGAINMIFTAVSVLLV. N347 contributes to the D-glucose binding site. The Cytoplasmic portion of the chain corresponds to 359–365; the sequence is EKAGRRT. A helical membrane pass occupies residues 366–386; that stretch reads LFLAGMIGMFFCAVFMSLGLV. The Extracellular segment spans residues 387–401; the sequence is LLDKFTWMSYVSMTA. The chain crosses the membrane as a helical span at residues 402 to 422; the sequence is IFLFVSFFEIGPGPIPWFMVA. E410 and W418 together coordinate D-glucose. The Cytoplasmic portion of the chain corresponds to 423 to 431; it reads EFFSQGPRP. Residues 432–452 form a helical membrane-spanning segment; it reads TALALAAFSNWVCNFIIALCF. The Extracellular portion of the chain corresponds to 453 to 459; the sequence is QYIADFL. Residues 460–480 form a helical membrane-spanning segment; sequence GPYVFFLFAGVVLVFTLFTFF. Over 481–522 the chain is Cytoplasmic; the sequence is KVPETKGKSFDEIAAEFRKKSGSAPPRKATVQMEFLGSSETV. Phosphothreonine is present on T521.

It belongs to the major facilitator superfamily. Sugar transporter (TC 2.A.1.1) family. Glucose transporter subfamily. In terms of processing, N-glycosylated; required for stability and retention at the cell surface of pancreatic beta cells. As to expression, present in liver, intestine, kidney and beta-pancreatic islet cells.

Its subcellular location is the cell membrane. It carries out the reaction D-glucose(out) = D-glucose(in). The catalysed reaction is D-fructose(out) = D-fructose(in). The enzyme catalyses L-dehydroascorbate(out) = L-dehydroascorbate(in). It catalyses the reaction D-galactose(in) = D-galactose(out). With respect to regulation, D-glucose and maltose competitively inhibit fructose transport. D-glucose, D-fructose and maltose inhibit deoxyglucose transport. Its function is as follows. Facilitative hexose transporter that mediates the transport of glucose, fructose and galactose. Likely mediates the bidirectional transfer of glucose across the plasma membrane of hepatocytes and is responsible for uptake of glucose by the beta cells; may comprise part of the glucose-sensing mechanism of the beta cell. May also participate with the Na(+)/glucose cotransporter in the transcellular transport of glucose in the small intestine and kidney. Also able to mediate the transport of dehydroascorbate. In Rattus norvegicus (Rat), this protein is Solute carrier family 2, facilitated glucose transporter member 2.